Reading from the N-terminus, the 342-residue chain is Heat-inducible transcription repressor HrcA (342 aa).

It belongs to the HrcA family.

Its function is as follows. Negative regulator of class I heat shock genes (grpE-dnaK-dnaJ and groELS operons). Prevents heat-shock induction of these operons. The protein is Heat-inducible transcription repressor HrcA of Oceanobacillus iheyensis (strain DSM 14371 / CIP 107618 / JCM 11309 / KCTC 3954 / HTE831).